Reading from the N-terminus, the 308-residue chain is Very-long-chain enoyl-CoA reductase (308 aa).

Residues 1-86 are Cytoplasmic-facing; that stretch reads MKHYEVEILD…YFRDLGAQIS (86 aa). Lys22 carries the N6-acetyllysine modification. Ser58 bears the Phosphoserine mark. Residue Lys60 is modified to N6-acetyllysine. Residues 87–106 form a helical membrane-spanning segment; sequence WVTVFLTEYAGPLFIYLLFY. The Lumenal portion of the chain corresponds to 107–124; the sequence is FRVPFIYGRKYDFTSSRH. Residues 125–147 traverse the membrane as a helical segment; the sequence is TVVHLACICHSFHYIKRLLETLF. Topologically, residues 148–158 are cytoplasmic; that stretch reads VHRFSHGTMPL. Residues 159–180 traverse the membrane as a helical segment; it reads RNIFKNCTYYWGFAAWMAYYIN. Over 181–189 the chain is Lumenal; the sequence is HPLYTPPTY. Residues 190–216 form a helical membrane-spanning segment; it reads GAQQVKLALAIFVICQLGNFSIHMALR. The Cytoplasmic portion of the chain corresponds to 217–245; sequence DLRPAGSKTRKIPYPTRNPFTWLFLLVSC. The helical transmembrane segment at 246–262 threads the bilayer; that stretch reads PNYTYEVGSWIGFAIMT. Over 263 to 264 the chain is Lumenal; the sequence is QC. The helical transmembrane segment at 265 to 292 threads the bilayer; sequence LPVALFSLVGFTQMTIWAKGKHRSYLKE. Over 293 to 308 the chain is Cytoplasmic; that stretch reads FRDYPPLRMPIIPFLL.

This sequence belongs to the steroid 5-alpha reductase family. In terms of assembly, interacts with ELOVL1 and LASS2. In terms of processing, glycosylated.

Its subcellular location is the endoplasmic reticulum membrane. The enzyme catalyses a very-long-chain 2,3-saturated fatty acyl-CoA + NADP(+) = a very-long-chain (2E)-enoyl-CoA + NADPH + H(+). It carries out the reaction octadecanoyl-CoA + NADP(+) = (2E)-octadecenoyl-CoA + NADPH + H(+). It catalyses the reaction (2E,7Z,10Z,13Z,16Z)-docosapentaenoyl-CoA + NADPH + H(+) = (7Z,10Z,13Z,16Z)-docosatetraenoyl-CoA + NADP(+). The catalysed reaction is (2E,7Z,10Z,13Z,16Z,19Z)-docosahexaenoyl-CoA + NADPH + H(+) = (7Z,10Z,13Z,16Z,19Z)-docosapentaenoyl-CoA + NADP(+). The enzyme catalyses (2E,8Z,11Z,14Z)-eicosatetraenoyl-CoA + NADPH + H(+) = (8Z,11Z,14Z)-eicosatrienoyl-CoA + NADP(+). It carries out the reaction (2E)-hexadecenoyl-CoA + NADPH + H(+) = hexadecanoyl-CoA + NADP(+). Its pathway is lipid metabolism; fatty acid biosynthesis. The protein operates within lipid metabolism; sphingolipid metabolism. Its function is as follows. Involved in both the production of very long-chain fatty acids for sphingolipid synthesis and the degradation of the sphingosine moiety in sphingolipids through the sphingosine 1-phosphate metabolic pathway. Catalyzes the last of the four reactions of the long-chain fatty acids elongation cycle. This endoplasmic reticulum-bound enzymatic process, allows the addition of 2 carbons to the chain of long- and very long-chain fatty acids/VLCFAs per cycle. This enzyme reduces the trans-2,3-enoyl-CoA fatty acid intermediate to an acyl-CoA that can be further elongated by entering a new cycle of elongation. Thereby, it participates in the production of VLCFAs of different chain lengths that are involved in multiple biological processes as precursors of membrane lipids and lipid mediators. Catalyzes the saturation step of the sphingosine 1-phosphate metabolic pathway, the conversion of trans-2-hexadecenoyl-CoA to palmitoyl-CoA. This is Very-long-chain enoyl-CoA reductase (TECR) from Bos taurus (Bovine).